We begin with the raw amino-acid sequence, 370 residues long: Actin-related protein 2/3 complex subunit 1A (370 aa).

WD repeat units follow at residues 6–45 (FLLE…WVKA), 50–89 (EHNG…WKPT), 140–179 (PIRS…VDEK), 202–241 (GTGG…QVST), 244–284 (TEFL…TFVS), and 322–365 (LHQN…SSIQ).

Belongs to the WD repeat ARPC1 family. Probable component of the Arp2/3 complex in which it may replace ARPC1B.

Its subcellular location is the cytoplasm. It localises to the cytoskeleton. It is found in the nucleus. Functionally, probably functions as a component of the Arp2/3 complex which is involved in regulation of actin polymerization and together with an activating nucleation-promoting factor (NPF) mediates the formation of branched actin networks. In addition to its role in the cytoplasmic cytoskeleton, the Arp2/3 complex also promotes actin polymerization in the nucleus, thereby regulating gene transcription and repair of damaged DNA. The sequence is that of Actin-related protein 2/3 complex subunit 1A (ARPC1A) from Bos taurus (Bovine).